The sequence spans 466 residues: Muscarinic acetylcholine receptor M2 (466 aa).

Residues 1 to 22 (MNNSTNSSNSGLALTSPYKTFE) are Extracellular-facing. N-linked (GlcNAc...) asparagine glycosylation is found at N2, N3, and N6. The helical transmembrane segment at 23-45 (VVFIVLVAGSLSLVTIIGNILVM) threads the bilayer. Residues 46–59 (VSIKVNRHLQTVNN) are Cytoplasmic-facing. A helical membrane pass occupies residues 60-80 (YFLFSLACADLIIGVFSMNLY). The Extracellular portion of the chain corresponds to 81 to 97 (TLYTVIGYWPLGPVVCD). An intrachain disulfide couples C96 to C176. Residues 98–119 (LWLALDYVVSNASVMNLLIISF) traverse the membrane as a helical segment. The Important for signaling signature appears at 120 to 122 (DRY). Residues 120 to 139 (DRYFCVTKPLTYPVKRTTKM) are Cytoplasmic-facing. The chain crosses the membrane as a helical span at residues 140-162 (AGMMIAAAWVLSFILWAPAILFW). Residues 163-184 (QFIVGVRTVEDGECYIQFFSNA) are Extracellular-facing. The helical transmembrane segment at 185 to 209 (AVTFGTAIAAFYLPVIIMTVLYWHI) threads the bilayer. Topologically, residues 210-387 (SRASKSRIKK…PPSREKKVTR (178 aa)) are cytoplasmic. The disordered stretch occupies residues 218–320 (KKDKKEPVAN…SLGHSKDENS (103 aa)). Phosphoserine is present on S232. Residues 254-270 (ALEHNKIQNGKAPRDAV) are compositionally biased toward basic and acidic residues. Polar residues-rich tracts occupy residues 284 to 293 (NDSTSVSAVA) and 304 to 313 (DENTVSTSLG). Residues 388–410 (TILAILLAFIITWAPYNVMVLIN) traverse the membrane as a helical segment. Residues 411–418 (TFCAPCIP) are Extracellular-facing. A disulfide bridge links C413 with C416. A helical membrane pass occupies residues 419–442 (NTVWTIGYWLCYINSTINPACYAL). Positions 436–440 (NPACY) match the Important for signaling motif. The Cytoplasmic portion of the chain corresponds to 443-466 (CNATFKKTFKHLLMCHYKNIGATR). A phosphothreonine mark is found at T446, T450, and T465.

This sequence belongs to the G-protein coupled receptor 1 family. Muscarinic acetylcholine receptor subfamily. CHRM2 sub-subfamily. In terms of assembly, interacts with ARRB1 and ARRB2. Interacts with RACK1; the interaction regulates CHRM2 internalization. Phosphorylated in response to agonist treatment.

The protein localises to the cell membrane. It localises to the postsynaptic cell membrane. Functionally, the muscarinic acetylcholine receptor mediates various cellular responses, including inhibition of adenylate cyclase, breakdown of phosphoinositides and modulation of potassium channels through the action of G proteins. Primary transducing effect is adenylate cyclase inhibition. In Sus scrofa (Pig), this protein is Muscarinic acetylcholine receptor M2 (CHRM2).